The chain runs to 277 residues: Urease accessory protein UreD (277 aa).

The interval 1–20 (MRQTAQEDASPAPMQRAHGT) is disordered.

Belongs to the UreD family. In terms of assembly, ureD, UreF and UreG form a complex that acts as a GTP-hydrolysis-dependent molecular chaperone, activating the urease apoprotein by helping to assemble the nickel containing metallocenter of UreC. The UreE protein probably delivers the nickel.

The protein localises to the cytoplasm. In terms of biological role, required for maturation of urease via the functional incorporation of the urease nickel metallocenter. The polypeptide is Urease accessory protein UreD (Chelativorans sp. (strain BNC1)).